The sequence spans 2319 residues: MQIALFACFFLSLFNFCSSAIRRYYLGAVELSWNYIQSDLLSVLHTDSRFLPRMSTSFPFNTSIMYKKTVFVEYKDQLFNIAKPRPPWMGLLGPTIWTEVHDTVVITLKNMASHPVSLHAVGVSYWKASEGDEYEDQTSQMEKEDDKVFPGESHTYVWQVLKENGPMASDPPCLTYSYMSHVDLVKDLNSGLIGALLVCKEGSLSKERTQMLYQFVLLFAVFDEGKSWHSETNDSYTQSMDSASARDWPKMHTVNGYVNRSLPGLIGCHRKSVYWHVIGMGTTPEIHSIFLEGHTFFVRNHRQASLEISPITFLTAQTLLIDLGQFLLFCHISSHKHDGMEAYVKVDSCPEESQWQKKNNNEEMEDYDDDLYSEMDMFTLDYDSSPFIQIRSVAKKYPKTWIHYISAEEEDWDYAPSVPTSDNGSYKSQYLSNGPHRIGRKYKKVRFIAYTDETFKTRETIQHESGLLGPLLYGEVGDTLLIIFKNQASRPYNIYPHGITDVSPLHARRLPRGIKHVKDLPIHPGEIFKYKWTVTVEDGPTKSDPRCLTRYYSSFINPERDLASGLIGPLLICYKESVDQRGNQMMSDKRNVILFSIFDENQSWYITENMQRFLPNAAKTQPQDPGFQASNIMHSINGYVFDSLELTVCLHEVAYWHILSVGAQTDFLSIFFSGYTFKHKMVYEDTLTLFPFSGETVFMSMENPGLWVLGCHNSDFRKRGMTALLKVSSCDKSTSDYYEEIYEDIPTQLVNENNVIDPRSFFQNTNHPNTRKKKFKDSTIPKNDMEKIEPQFEEIAEMLKVQSVSVSDMLMLLGQSHPTPHGLFLSDGQEAIYEAIHDDHSPNAIDSNEGPSKVTQLRPESHHSEKIVFTPQPGLQLRSNKSLETTIEVKWKKLGLQVSSLPSNLMTTTILSDNLKATFEKTDSSGFPDMPVHSSSKLSTTAFGKKAYSLVGSHVPLNVSEENSDSNILDSTLMYSQESLPRDNILSMENDRLLREKRFHGIALLTKDNTLFKDNVSLMKTNKTYNHSTTNEKLHTESPTSIENSTTDLQDAILKVNSEIQEVTALIHDGTLLGKNSTYLRLNHMLNRTTSTKNKDIFHRKDEDPIPQDEENTIMPFSKMLFLSESSNWFKKTNGNNSLNSEQEHSPKQLVYLMFKKYVKNQSFLSEKNKVTVEQDGFTKNIGLKDMAFPHNMSIFLTTLSNVHENGRHNQEKNIQEEIEKEALIEEKVVLPQVHEATGSKNFLKDILILGTRQNISLYEVHVPVLQNITSINNSTNTVQIHMEHFFKRRKDKETNSEGLVNKTREMVKNYPSQKNITTQRSKRALGQFRLSTQWLKTINCSTQCIIKQIDHSKEMKKFITKSSLSDSSVIKSTTQTNSSDSHIVKTSAFPPIDLKRSPFQNKFSHVQASSYIYDFKTKSSRIQESNNFLKETKINNPSLAILPWNMFIDQGKFTSPGKSNTNSVTYKKRENIIFLKPTLPEESGKIELLPQVSIQEEEILPTETSHGSPGHLNLMKEVFLQKIQGPTKWNKAKRHGESIKGKTESSKNTRSKLLNHHAWDYHYAAQIPKDMWKSKEKSPEIISIKQEDTILSLRPHGNSHSIGANEKQNWPQRETTWVKQGQTQRTCSQIPPVLKRHQRELSAFQSEQEATDYDDAITIETIEDFDIYSEDIKQGPRSFQQKTRHYFIAAVERLWDYGMSTSHVLRNRYQSDNVPQFKKVVFQEFTDGSFSQPLYRGELNEHLGLLGPYIRAEVEDNIMVTFKNQASRPYSFYSSLISYKEDQRGEEPRRNFVKPNETKIYFWKVQHHMAPTEDEFDCKAWAYFSDVDLERDMHSGLIGPLLICHANTLNPAHGRQVSVQEFALLFTIFDETKSWYFTENVKRNCKTPCNFQMEDPTLKENYRFHAINGYVMDTLPGLVMAQDQRIRWYLLSMGNNENIQSIHFSGHVFTVRKKEEYKMAVYNLYPGVFETLEMIPSRAGIWRVECLIGEHLQAGMSTLFLVYSKQCQIPLGMASGSIRDFQITASGHYGQWAPNLARLHYSGSINAWSTKEPFSWIKVDLLAPMIVHGIKTQGARQKFSSLYISQFIIMYSLDGKKWLSYQGNSTGTLMVFFGNVDSSGIKHNSFNPPIIARYIRLHPTHSSIRSTLRMELMGCDLNSCSIPLGMESKVISDTQITASSYFTNMFATWSPSQARLHLQGRTNAWRPQVNDPKQWLQVDLQKTMKVTGIITQGVKSLFTSMFVKEFLISSSQDGHHWTQILYNGKVKVFQGNQDSSTPMMNSLDPPLLTRYLRIHPQIWEHQIALRLEILGCEAQQQY.

The N-terminal stretch at 1–19 (MQIALFACFFLSLFNFCSS) is a signal peptide. Plastocyanin-like domains lie at 20–199 (AIRR…LLVC) and 207–349 (ERTQ…VDSC). An F5/8 type A 1 domain is found at 20–349 (AIRRYYLGAV…MEAYVKVDSC (330 aa)). An N-linked (GlcNAc...) asparagine glycan is attached at N61. An intrachain disulfide couples C173 to C199. Residues N233 and N259 are each glycosylated (N-linked (GlcNAc...) asparagine). Y367 is subject to Sulfotyrosine. Plastocyanin-like domains lie at 399–573 (KTWI…LLIC) and 583–730 (NQMM…VSSC). The region spanning 399-730 (KTWIHYISAE…MTALLKVSSC (332 aa)) is the F5/8 type A 2 domain. N423 is a glycosylation site (N-linked (GlcNAc...) asparagine). C547 and C573 are disulfide-bonded. N601 carries an N-linked (GlcNAc...) asparagine glycan. Sulfotyrosine occurs at positions 737, 738, and 742. The segment at 760–1640 (SFFQNTNHPN…IPPVLKRHQR (881 aa)) is b. N-linked (GlcNAc...) asparagine glycosylation is found at N880, N958, N1015, N1022, N1026, N1044, N1076, N1087, N1136, N1161, N1192, N1255, N1268, N1273, N1274, N1302, N1316, N1340, and N1378. The disordered stretch occupies residues 1530-1549 (WNKAKRHGESIKGKTESSKN). Basic and acidic residues predominate over residues 1536-1548 (HGESIKGKTESSK). Residues Y1669 and Y1687 each carry the sulfotyrosine modification. 2 consecutive Plastocyanin-like domains span residues 1683-1845 (KTRH…LLIC) and 1855-2008 (GRQV…SKQC). The region spanning 1683-2008 (KTRHYFIAAV…TLFLVYSKQC (326 aa)) is the F5/8 type A 3 domain. N1797 carries N-linked (GlcNAc...) asparagine glycosylation. 3 disulfides stabilise this stretch: C1819-C1845, C2008-C2156, and C2161-C2313. F5/8 type C domains are found at residues 2008-2156 (CQIP…LMGC) and 2161-2313 (CSIP…ILGC). Residue N2105 is glycosylated (N-linked (GlcNAc...) asparagine).

The protein belongs to the multicopper oxidase family. Interacts with vWF. vWF binding is essential for the stabilization of F8 in circulation. The binding of vWF and activation depend on the sulfation of Tyr-1669. In terms of processing, proteolytically cleaved by cathepsin CTSG to produce a partially activated form. As to expression, found in most tissues.

The protein localises to the secreted. Its subcellular location is the extracellular space. Its function is as follows. Factor VIII, along with calcium and phospholipid, acts as a cofactor for factor IXa when it converts factor X to the activated form, factor Xa. This is Coagulation factor VIII (F8) from Mus musculus (Mouse).